The chain runs to 590 residues: ATP-dependent zinc metalloprotease FtsH 1 (590 aa).

The Cytoplasmic portion of the chain corresponds to 1 to 8 (MLKLTKKQ). Residues 9–29 (LIIVLGIAIVVVSAIGYAVYT) traverse the membrane as a helical segment. At 30 to 103 (QYFNEDKLEI…QVRETTDQYS (74 aa)) the chain is on the extracellular side. The chain crosses the membrane as a helical span at residues 104–124 (VVQVITFVVLIGGFIGVAIFL). The Cytoplasmic portion of the chain corresponds to 125–590 (SKKNATQTSK…NEIFSGFQSM (466 aa)). ATP is bound at residue 195 to 202 (GSPGTGKT). His-418 is a binding site for Zn(2+). Residue Glu-419 is part of the active site. 2 residues coordinate Zn(2+): His-422 and Asp-496.

In the central section; belongs to the AAA ATPase family. The protein in the C-terminal section; belongs to the peptidase M41 family. In terms of assembly, homohexamer. Zn(2+) is required as a cofactor.

The protein localises to the cell membrane. Its function is as follows. Acts as a processive, ATP-dependent zinc metallopeptidase for both cytoplasmic and membrane proteins. Plays a role in the quality control of integral membrane proteins. In Alkaliphilus metalliredigens (strain QYMF), this protein is ATP-dependent zinc metalloprotease FtsH 1.